The primary structure comprises 331 residues: Phospho-N-acetylmuramoyl-pentapeptide-transferase (331 aa).

The next 9 helical transmembrane spans lie at 7-27 (IIYTIIIGFIITLILGPLTIP), 54-74 (TIGGIILIMSIIITSLTSGLI), 78-98 (LWIALAATVAFGIIGFIDDFI), 106-126 (LGLRAYQKLILQGTIAVILAI), 133-153 (IMGTEVIVPFVGEGITIAGFT), 154-174 (ITQTIDLGILYIPFIVFVVVA), 195-215 (IIAAFFALVAMSWGYVSLAIF), 249-269 (AIATIAVLMNVVLIIPIVGGI), and 311-331 (VVIVFWVVTVILCLVGMLALS).

Belongs to the glycosyltransferase 4 family. MraY subfamily. The cofactor is Mg(2+).

The protein localises to the cell membrane. It carries out the reaction UDP-N-acetyl-alpha-D-muramoyl-L-alanyl-gamma-D-glutamyl-meso-2,6-diaminopimeloyl-D-alanyl-D-alanine + di-trans,octa-cis-undecaprenyl phosphate = di-trans,octa-cis-undecaprenyl diphospho-N-acetyl-alpha-D-muramoyl-L-alanyl-D-glutamyl-meso-2,6-diaminopimeloyl-D-alanyl-D-alanine + UMP. The protein operates within cell wall biogenesis; peptidoglycan biosynthesis. Functionally, catalyzes the initial step of the lipid cycle reactions in the biosynthesis of the cell wall peptidoglycan: transfers peptidoglycan precursor phospho-MurNAc-pentapeptide from UDP-MurNAc-pentapeptide onto the lipid carrier undecaprenyl phosphate, yielding undecaprenyl-pyrophosphoryl-MurNAc-pentapeptide, known as lipid I. The polypeptide is Phospho-N-acetylmuramoyl-pentapeptide-transferase (Alkaliphilus metalliredigens (strain QYMF)).